Here is a 147-residue protein sequence, read N- to C-terminus: Large ribosomal subunit protein uL13 (147 aa).

It belongs to the universal ribosomal protein uL13 family. As to quaternary structure, part of the 50S ribosomal subunit.

This protein is one of the early assembly proteins of the 50S ribosomal subunit, although it is not seen to bind rRNA by itself. It is important during the early stages of 50S assembly. This Corynebacterium diphtheriae (strain ATCC 700971 / NCTC 13129 / Biotype gravis) protein is Large ribosomal subunit protein uL13.